The following is a 505-amino-acid chain: Maturase K (505 aa).

It belongs to the intron maturase 2 family. MatK subfamily.

The protein resides in the plastid. It localises to the chloroplast. In terms of biological role, usually encoded in the trnK tRNA gene intron. Probably assists in splicing its own and other chloroplast group II introns. This chain is Maturase K, found in Froelichia floridana (Florida snake-cotton).